The following is a 101-amino-acid chain: Small ribosomal subunit protein uS14 (101 aa).

Belongs to the universal ribosomal protein uS14 family. Part of the 30S ribosomal subunit. Contacts proteins S3 and S10.

Functionally, binds 16S rRNA, required for the assembly of 30S particles and may also be responsible for determining the conformation of the 16S rRNA at the A site. This chain is Small ribosomal subunit protein uS14, found in Burkholderia ambifaria (strain MC40-6).